A 275-amino-acid chain; its full sequence is Large ribosomal subunit protein uL2c (275 aa).

2 disordered regions span residues 32-53 (SLSK…TCRH) and 218-242 (PTVR…APIG).

The protein belongs to the universal ribosomal protein uL2 family. As to quaternary structure, part of the 50S ribosomal subunit.

It localises to the plastid. The protein localises to the chloroplast. This chain is Large ribosomal subunit protein uL2c (rpl2), found in Tetradesmus obliquus (Green alga).